Consider the following 369-residue polypeptide: Glutamate 5-kinase (369 aa).

K14 serves as a coordination point for ATP. Substrate-binding residues include S56, D143, and N155. ATP-binding positions include 175 to 176 (SD) and 215 to 221 (TGGMASK). The 75-residue stretch at 277–351 (AGKIRLDQGA…GMKTQELPDD (75 aa)) folds into the PUA domain.

This sequence belongs to the glutamate 5-kinase family.

It localises to the cytoplasm. It catalyses the reaction L-glutamate + ATP = L-glutamyl 5-phosphate + ADP. It functions in the pathway amino-acid biosynthesis; L-proline biosynthesis; L-glutamate 5-semialdehyde from L-glutamate: step 1/2. Functionally, catalyzes the transfer of a phosphate group to glutamate to form L-glutamate 5-phosphate. The chain is Glutamate 5-kinase from Corynebacterium efficiens (strain DSM 44549 / YS-314 / AJ 12310 / JCM 11189 / NBRC 100395).